Here is a 186-residue protein sequence, read N- to C-terminus: EF-hand protein 5 (186 aa).

The segment at 1-23 (MSRSKEVSPNLSQQKRGDVRSAG) is disordered. EF-hand domains are found at residues 41–76 (SAELQEGYRILTGGQKANIISDKDLFKAIHSCGLHT), 77–112 (SEEEVNDLLRVVHQDERTLGLEFPEFMMLMTKGIDE), 113–148 (ASIAEMRRPFSVLDKAKTGVITKKQFTELFVSSGEH), and 149–186 (SSAEELEELMLLAETSEELEVVDYNKLINELAILLNKM). 3 residues coordinate Ca(2+): Glu98, Asp126, and Thr130.

This is EF-hand protein 5 from Leishmania tarentolae (Sauroleishmania tarentolae).